The following is a 142-amino-acid chain: Large ribosomal subunit protein uL22c (142 aa).

Belongs to the universal ribosomal protein uL22 family. Part of the 50S ribosomal subunit.

The protein localises to the plastid. Its subcellular location is the chloroplast. In terms of biological role, this protein binds specifically to 23S rRNA. The globular domain of the protein is located near the polypeptide exit tunnel on the outside of the subunit, while an extended beta-hairpin is found that lines the wall of the exit tunnel in the center of the 70S ribosome. This Oenothera parviflora (Small-flowered evening primrose) protein is Large ribosomal subunit protein uL22c (rpl22).